Reading from the N-terminus, the 367-residue chain is MTEITHRTKTRPVKVGNLTIGGNNEVVVQSMTTTKTHDVEATVAEIKRLEEAGCQVVRVACPDMRAAEAIPAIKKQISIPLVVDIHFDYKLALKAIEGGADKIRINPGNIGKRHKVEAVVKAAKEKGIPIRIGVNAGSLEKRILDKYGYPTADGMVESALHHIKILEDLDFHDIIVSMKASDVNLAIEAYEKAAKAFDYPLHLGITESGTLFAGTVKSAAGLGAILNMGIGNTVRVSLSADPVEEVKVARELLKSFGLASNAATLISCPTCGRIEIDLISIANEMEEYISKIRAPIKVAVLGCAVNGPGEAREADIGIAGARGEGLLFRKGEIVRKVPEETMVEELKKEIDKIAEEYFAKQKELEKA.

[4Fe-4S] cluster-binding residues include C268, C271, C303, and E310.

It belongs to the IspG family. It depends on [4Fe-4S] cluster as a cofactor.

It catalyses the reaction (2E)-4-hydroxy-3-methylbut-2-enyl diphosphate + oxidized [flavodoxin] + H2O + 2 H(+) = 2-C-methyl-D-erythritol 2,4-cyclic diphosphate + reduced [flavodoxin]. It functions in the pathway isoprenoid biosynthesis; isopentenyl diphosphate biosynthesis via DXP pathway; isopentenyl diphosphate from 1-deoxy-D-xylulose 5-phosphate: step 5/6. Converts 2C-methyl-D-erythritol 2,4-cyclodiphosphate (ME-2,4cPP) into 1-hydroxy-2-methyl-2-(E)-butenyl 4-diphosphate. This chain is 4-hydroxy-3-methylbut-2-en-1-yl diphosphate synthase (flavodoxin), found in Halalkalibacterium halodurans (strain ATCC BAA-125 / DSM 18197 / FERM 7344 / JCM 9153 / C-125) (Bacillus halodurans).